We begin with the raw amino-acid sequence, 326 residues long: UDP-N-acetylglucosamine transporter (326 aa).

8 helical membrane-spanning segments follow: residues 8-24 (LSLG…VLTM), 42-58 (AVVV…ILLV), 138-154 (VYQW…VAFV), 174-190 (FVGL…SGFA), 210-226 (IQLG…GVYI), 247-263 (IVVI…AAVI), 269-285 (ILKG…STLI), and 296-312 (TSVF…ATFL).

Belongs to the nucleotide-sugar transporter family. SLC35A subfamily. Interacts with SLC35A2; the interaction is reduced in the presence of SLC35A4. Found in a complex with SLC35A2 and SLC35A4.

Its subcellular location is the golgi apparatus membrane. Functionally, uridine diphosphate-N-acetylglucosamine (UDP-GlcNAc) transporter in the Golgi apparatus. May supply UDP-GlcNAc as substrate for Golgi-resident glycosyltransferases that generate branching of diantennary oligosaccharides. The protein is UDP-N-acetylglucosamine transporter (SLC35A3) of Canis lupus familiaris (Dog).